The chain runs to 308 residues: 4-hydroxy-tetrahydrodipicolinate synthase (308 aa).

A pyruvate-binding site is contributed by Thr-53. Tyr-141 serves as the catalytic Proton donor/acceptor. Lys-169 functions as the Schiff-base intermediate with substrate in the catalytic mechanism. A pyruvate-binding site is contributed by Val-209.

Belongs to the DapA family. As to quaternary structure, homotetramer; dimer of dimers.

Its subcellular location is the cytoplasm. It catalyses the reaction L-aspartate 4-semialdehyde + pyruvate = (2S,4S)-4-hydroxy-2,3,4,5-tetrahydrodipicolinate + H2O + H(+). Its pathway is amino-acid biosynthesis; L-lysine biosynthesis via DAP pathway; (S)-tetrahydrodipicolinate from L-aspartate: step 3/4. Functionally, catalyzes the condensation of (S)-aspartate-beta-semialdehyde [(S)-ASA] and pyruvate to 4-hydroxy-tetrahydrodipicolinate (HTPA). This is 4-hydroxy-tetrahydrodipicolinate synthase from Acidothermus cellulolyticus (strain ATCC 43068 / DSM 8971 / 11B).